The primary structure comprises 138 residues: Large ribosomal subunit protein bL17 (138 aa).

This sequence belongs to the bacterial ribosomal protein bL17 family. As to quaternary structure, part of the 50S ribosomal subunit. Contacts protein L32.

This is Large ribosomal subunit protein bL17 from Granulibacter bethesdensis (strain ATCC BAA-1260 / CGDNIH1).